Reading from the N-terminus, the 273-residue chain is Putative expansin-B2 (273 aa).

The signal sequence occupies residues 1 to 29; sequence MTILVVDRYYMLMNLLFALTCLLLNLTHC. N36 carries an N-linked (GlcNAc...) asparagine glycan. The Expansin-like EG45 domain maps to 65-173; it reads GGACGYGNAV…KKVECNYIGK (109 aa). 3 disulfide bridges follow: C68/C97, C100/C168, and C105/C111. An Expansin-like CBD domain is found at 186 to 269; that stretch reads NSFAVLVAYV…NWQPGAIYKS (84 aa).

It belongs to the expansin family. Expansin B subfamily.

It is found in the secreted. The protein resides in the cell wall. Its subcellular location is the membrane. In terms of biological role, may cause loosening and extension of plant cell walls by disrupting non-covalent bonding between cellulose microfibrils and matrix glucans. No enzymatic activity has been found. In Arabidopsis thaliana (Mouse-ear cress), this protein is Putative expansin-B2 (EXPB2).